A 548-amino-acid polypeptide reads, in one-letter code: Membrane protein insertase YidC (548 aa).

The chain crosses the membrane as a helical span at residues 6–26 (NLLVIALLFVSFMIWQAWEQD). A disordered region spans residues 28–55 (NPQPQAQQTTQTTTTAAGSAADQGVPAS). Residues 30-50 (QPQAQQTTQTTTTAAGSAADQ) show a composition bias toward low complexity. 4 helical membrane passes run 350 to 370 (FVGN…GIMY), 420 to 440 (LGGC…YYML), 458 to 478 (LSAQ…MFFI), and 499 to 519 (PVIF…YYIV).

Belongs to the OXA1/ALB3/YidC family. Type 1 subfamily. In terms of assembly, interacts with the Sec translocase complex via SecD. Specifically interacts with transmembrane segments of nascent integral membrane proteins during membrane integration.

Its subcellular location is the cell inner membrane. Functionally, required for the insertion and/or proper folding and/or complex formation of integral membrane proteins into the membrane. Involved in integration of membrane proteins that insert both dependently and independently of the Sec translocase complex, as well as at least some lipoproteins. Aids folding of multispanning membrane proteins. In Shigella dysenteriae serotype 1 (strain Sd197), this protein is Membrane protein insertase YidC.